Consider the following 238-residue polypeptide: MSSRSYKRVLLKLSGEALMGEDAFGINRSTIVRMTDEIAEVAALGVELAIVIGGGNIFRGVAPGAQGMDRATADYMGMMATIMNALALQDALKHKGVDTRVQSALNIDQVVEPYIRPKALRYLEEGKVVIFAAGTGNPFFTTDTAAALRGAEIGAEIVLKATKVDGIYSADPNKDPTATRYARISFDEAIVRRLEVMDATAFALCRDQKLPIKVFSINKSGALKRAVSGEDEGTLVHV.

ATP is bound at residue 12–15; sequence KLSG. Gly54 provides a ligand contact to UMP. ATP-binding residues include Gly55 and Arg59. Residues Asp74 and 135 to 142 contribute to the UMP site; that span reads TGNPFFTT. The ATP site is built by Thr162, Tyr168, and Asp171.

Belongs to the UMP kinase family. As to quaternary structure, homohexamer.

Its subcellular location is the cytoplasm. It carries out the reaction UMP + ATP = UDP + ADP. Its pathway is pyrimidine metabolism; CTP biosynthesis via de novo pathway; UDP from UMP (UMPK route): step 1/1. With respect to regulation, inhibited by UTP. Catalyzes the reversible phosphorylation of UMP to UDP. The chain is Uridylate kinase from Bordetella bronchiseptica (strain ATCC BAA-588 / NCTC 13252 / RB50) (Alcaligenes bronchisepticus).